The chain runs to 464 residues: Glutamate--tRNA ligase (464 aa).

Positions P9–G19 match the 'HIGH' region motif. The 'KMSKS' region motif lies at K242 to R246. K245 lines the ATP pocket.

The protein belongs to the class-I aminoacyl-tRNA synthetase family. Glutamate--tRNA ligase type 1 subfamily. Monomer.

Its subcellular location is the cytoplasm. The enzyme catalyses tRNA(Glu) + L-glutamate + ATP = L-glutamyl-tRNA(Glu) + AMP + diphosphate. In terms of biological role, catalyzes the attachment of glutamate to tRNA(Glu) in a two-step reaction: glutamate is first activated by ATP to form Glu-AMP and then transferred to the acceptor end of tRNA(Glu). In Neisseria meningitidis serogroup C / serotype 2a (strain ATCC 700532 / DSM 15464 / FAM18), this protein is Glutamate--tRNA ligase.